The primary structure comprises 124 residues: Small ribosomal subunit protein uS12 (124 aa).

Residues 9–28 (RTERQTLSRKTKSPALRSCP) form a disordered region. Asp-89 bears the 3-methylthioaspartic acid mark. A disordered region spans residues 104 to 124 (TAGVKDRRQSRSKYGAKAPKE).

It belongs to the universal ribosomal protein uS12 family. Part of the 30S ribosomal subunit. Contacts proteins S8 and S17. May interact with IF1 in the 30S initiation complex.

With S4 and S5 plays an important role in translational accuracy. In terms of biological role, interacts with and stabilizes bases of the 16S rRNA that are involved in tRNA selection in the A site and with the mRNA backbone. Located at the interface of the 30S and 50S subunits, it traverses the body of the 30S subunit contacting proteins on the other side and probably holding the rRNA structure together. The combined cluster of proteins S8, S12 and S17 appears to hold together the shoulder and platform of the 30S subunit. In Synechococcus sp. (strain RCC307), this protein is Small ribosomal subunit protein uS12.